Reading from the N-terminus, the 343-residue chain is Protein RecA (343 aa).

68–75 (GPESSGKT) contacts ATP.

Belongs to the RecA family.

Its subcellular location is the cytoplasm. In terms of biological role, can catalyze the hydrolysis of ATP in the presence of single-stranded DNA, the ATP-dependent uptake of single-stranded DNA by duplex DNA, and the ATP-dependent hybridization of homologous single-stranded DNAs. It interacts with LexA causing its activation and leading to its autocatalytic cleavage. The chain is Protein RecA from Syntrophobacter fumaroxidans (strain DSM 10017 / MPOB).